Here is a 211-residue protein sequence, read N- to C-terminus: Large ribosomal subunit protein uL4 (211 aa).

A disordered region spans residues 40 to 80; the sequence is QQAHSRQGTASTLTRSEVRGGGRKPYKQKGTGRARQGSIRT. The segment covering 41-54 has biased composition (polar residues); sequence QAHSRQGTASTLTR. Over residues 60–71 the composition is skewed to basic residues; it reads GGRKPYKQKGTG.

Belongs to the universal ribosomal protein uL4 family. Part of the 50S ribosomal subunit.

Functionally, one of the primary rRNA binding proteins, this protein initially binds near the 5'-end of the 23S rRNA. It is important during the early stages of 50S assembly. It makes multiple contacts with different domains of the 23S rRNA in the assembled 50S subunit and ribosome. In terms of biological role, forms part of the polypeptide exit tunnel. In Prochlorococcus marinus (strain MIT 9211), this protein is Large ribosomal subunit protein uL4.